The primary structure comprises 3010 residues: Genome polyprotein (3010 aa).

An N-acetylserine; by host modification is found at serine 2. An interaction with STAT1 region spans residues 2–23; that stretch reads STNGKPQRKTKRNTNRRPQDVK. Residues 2–58 form an interaction with EIF2AK2/PKR region; the sequence is STNGKPQRKTKRNTNRRPQDVKFPGGGQIVGGVYLLPRRGPRLGVRATRKTWERSQP. Residues 2 to 59 are interaction with DDX3X; it reads STNGKPQRKTKRNTNRRPQDVKFPGGGQIVGGVYLLPRRGPRLGVRATRKTWERSQPR. The segment at 2–75 is disordered; it reads STNGKPQRKT…PKARQPEGRA (74 aa). Residues 2 to 168 lie on the Cytoplasmic side of the membrane; it reads STNGKPQRKT…EDGVNYATGN (167 aa). 4 short sequence motifs (nuclear localization signal) span residues 5 to 13, 38 to 43, 58 to 64, and 66 to 71; these read GKPQRKTKR, PRRGPR, PRGRRQP, and PKARQP. Basic residues predominate over residues 7 to 16; sequence PQRKTKRNTN. Position 99 is a phosphoserine; by host (serine 99). The segment at 112-152 is important for endoplasmic reticulum and mitochondrial localization; the sequence is PRRRSRNLGKVIDTLTCGFADLMGYIPLVGAPLGGVARALA. Serine 116 carries the post-translational modification Phosphoserine; by host PKA. Positions 122–173 are interaction with APOA2; the sequence is VIDTLTCGFADLMGYIPLVGAPLGGVARALAHGVRVLEDGVNYATGNLPGCS. The important for lipid droplets localization stretch occupies residues 164–167; sequence YATG. The helical transmembrane segment at 169 to 189 threads the bilayer; the sequence is LPGCSFSIFLLALLSCLTIPA. Positions 178 to 191 are cleaved as a propeptide — ER anchor for the core protein, removed in mature form by host signal peptidase; it reads LLALLSCLTIPASA. Residues 190-358 are Lumenal-facing; that stretch reads SAYEVHNVSG…GGAHWGVLAG (169 aa). Residues asparagine 196, asparagine 209, asparagine 234, and asparagine 250 are each glycosylated (N-linked (GlcNAc...) asparagine; by host). Residues 265-296 form an important for fusion region; the sequence is LVGAAAFCSAMYVGDLCGSVFLVSQLFTFSPR. Residue asparagine 305 is glycosylated (N-linked (GlcNAc...) asparagine; by host). The helical transmembrane segment at 359–379 threads the bilayer; the sequence is LAYYSMVGNWAKVLIVMLLFA. Residues 380–725 lie on the Lumenal side of the membrane; the sequence is GVDGSTIVSG…WEYILLLFLL (346 aa). The HVR1 stretch occupies residues 385-411; that stretch reads TIVSGGTVARTTHSLASLFTQGASQKI. N-linked (GlcNAc...) (high mannose) asparagine; by host glycans are attached at residues asparagine 417, asparagine 423, asparagine 430, and asparagine 448. Intrachain disulfides connect cysteine 429/cysteine 552, cysteine 452/cysteine 459, cysteine 486/cysteine 494, and cysteine 503/cysteine 508. The segment at 474 to 479 is HVR2; the sequence is YTEADI. A CD81-binding 1 region spans residues 480-493; the sequence is QDQRPYCWHYAPRP. N-linked (GlcNAc...) (high mannose) asparagine; by host glycosylation is present at asparagine 532. Asparagine 540 is a glycosylation site (N-linked (GlcNAc...) asparagine; by host). The CD81-binding 2 stretch occupies residues 544 to 551; it reads PPQGNWFG. Asparagine 556 carries an N-linked (GlcNAc...) (high mannose) asparagine; by host glycan. A disulfide bridge links cysteine 564 with cysteine 569. An N-linked (GlcNAc...) (high mannose) asparagine; by host glycan is attached at asparagine 576. 3 disulfide bridges follow: cysteine 581-cysteine 585, cysteine 597-cysteine 620, and cysteine 607-cysteine 644. 2 N-linked (GlcNAc...) (high mannose) asparagine; by host glycosylation sites follow: asparagine 623 and asparagine 645. A disulfide bond links cysteine 652 and cysteine 677. The interval 660–671 is PKR/eIF2-alpha phosphorylation homology domain (PePHD); it reads SELSPLLLSTTE. The helical transmembrane segment at 726–746 threads the bilayer; it reads LADARVCACLWMMLLIAQAEA. Residues 747–757 lie on the Lumenal side of the membrane; it reads ALENLVVFNAA. Residues 758–778 traverse the membrane as a helical segment; that stretch reads SVAGMHGTLSFLVFFCAAWYI. At 779–781 the chain is on the cytoplasmic side; sequence KGR. A helical transmembrane segment spans residues 782–803; that stretch reads LVPGAAYALYGVWPLLLLLLAL. Topologically, residues 804-813 are lumenal; sequence PPRAYAMDRE. Residues 814-834 traverse the membrane as a helical segment; sequence MAASCGGAVFVGLVLLTLSPH. Residues 835-838 are Cytoplasmic-facing; it reads YKMF. The helical transmembrane segment at 839–859 threads the bilayer; it reads LARLIWWLQYFITRAEAHLQV. Over 860 to 881 the chain is Lumenal; the sequence is WIPPLNVRGGRDAIILLTCAAY. A helical transmembrane segment spans residues 882 to 902; sequence PELIFDITKILLAILGPLMVL. The Peptidase C18 domain maps to 903–1026; the sequence is QAGLTRIPYF…SLEGRGWRLL (124 aa). At 903–1657 the chain is on the cytoplasmic side; it reads QAGLTRIPYF…CMSADLEVVT (755 aa). The protease NS2-3 stretch occupies residues 904-1206; the sequence is AGLTRIPYFV…PVESMETTMR (303 aa). Cysteine 922 is lipidated: S-palmitoyl cysteine; by host. An interaction with host SCPS1 region spans residues 929 to 949; it reads AGGHYVQMALMKLAALTGTYV. Active-site for protease NS2 activity; shared with dimeric partner residues include histidine 952, glutamate 972, and cysteine 993. Residues 1027-1208 form the Peptidase S29 domain; it reads APITAYAQQT…ESMETTMRSP (182 aa). Active-site charge relay system; for serine protease NS3 activity residues include histidine 1083 and aspartate 1107. Zn(2+) contacts are provided by cysteine 1123 and cysteine 1125. Serine 1165 serves as the catalytic Charge relay system; for serine protease NS3 activity. Zn(2+)-binding residues include cysteine 1171 and histidine 1175. Positions 1217–1369 constitute a Helicase ATP-binding domain; sequence PAVPQAFQVA…PNIEEIALSN (153 aa). Residue 1230–1237 coordinates ATP; sequence APTGSGKS. Residues serine 1237 and glutamate 1317 each contribute to the Mg(2+) site. A DECH box motif is present at residues 1316 to 1319; the sequence is DECH. Residues 1486-1497 are RNA-binding; the sequence is QRRGRTSRGRRG. A helical membrane pass occupies residues 1658–1678; that stretch reads STWVLVGGVLAALAAYCLTTG. The interval 1679–1690 is NS3-binding; that stretch reads SVVIVGRIILSG. Topologically, residues 1679-1805 are cytoplasmic; it reads SVVIVGRIIL…SITSPLTTQS (127 aa). The chain crosses the membrane as a helical span at residues 1806 to 1824; sequence TLLFNILGGWVAAQLAPPG. Over 1825 to 1828 the chain is Lumenal; the sequence is AASA. The chain crosses the membrane as a helical span at residues 1829–1849; the sequence is FVGAGIAGAAVGSIGLGKVLV. A topological domain (cytoplasmic) is located at residue aspartate 1850. The helical transmembrane segment at 1851–1871 threads the bilayer; sequence MVAGYGAGVAGALVAFKVMSG. Residues 1872–1881 lie on the Lumenal side of the membrane; it reads EMPSTEDLVN. The helical transmembrane segment at 1882-1902 threads the bilayer; sequence LLPAILSPGALVVGVVCAAIL. Residues 1903–1972 lie on the Cytoplasmic side of the membrane; the sequence is RRHVDPGEGA…WINEDCSTPC (70 aa). 2 S-palmitoyl cysteine; by host lipidation sites follow: cysteine 1968 and cysteine 1972. Residues 1973–2002 lie within the membrane without spanning it; it reads SGSWLRDVWDWICTVLADFKTWLQSKLLPR. Residues 2003 to 2989 lie on the Cytoplasmic side of the membrane; it reads LPGVPFFSCQ…YHSLSRARPR (987 aa). The Zn(2+) site is built by cysteine 2011, cysteine 2029, cysteine 2031, and cysteine 2052. The tract at residues 2120–2208 is FKBP8-binding; sequence EFFTEVDGVR…ASSSASQLSA (89 aa). Residues 2120–2332 are transcriptional activation; that stretch reads EFFTEVDGVR…PIPPPRRKRT (213 aa). The tract at residues 2135–2139 is interaction with non-structural protein 4A; that stretch reads PACKP. The segment at 2189–2441 is interaction with host SKP2; it reads RLARGSPPSL…PCAAEESKLP (253 aa). Serine 2194 carries the post-translational modification Phosphoserine; by host; in p56. Phosphoserine; by host; in p58 is present on residues serine 2197, serine 2201, serine 2204, serine 2207, and serine 2210. Residues 2210–2249 form an ISDR region; sequence SLKAACTTRHTPPDADLIEANLLWRQEMGGNITRVESENK. Positions 2210–2275 are interaction with EIF2AK2/PKR; sequence SLKAACTTRH…REVSVPAEIL (66 aa). The tract at residues 2249 to 2306 is NS4B-binding; the sequence is KVVILDSFDPLRAEEDEREVSVPAEILRKSRKFPPALPVWARPDYNPPLLEPWKDPDY. The SH3-binding motif lies at 2322–2325; the sequence is PPIP. The Nuclear localization signal motif lies at 2326–2334; it reads PPRRKRTVV. Lysine 2350 is covalently cross-linked (Glycyl lysine isopeptide (Lys-Gly) (interchain with G-Cter in ubiquitin)). Residues 2351–2367 are compositionally biased toward low complexity; it reads TFGSSESSAAGSGTATA. Residues 2351-2409 form a disordered region; the sequence is TFGSSESSAAGSGTATAPPDQPSDDGDAGSDVESCSSMPPLEGEPGDPDLSDGSWSTVS. The interval 2354–2377 is V3; that stretch reads SSESSAAGSGTATAPPDQPSDDGD. 2 positions are modified to phosphoserine; by host: serine 2448 and serine 2461. Residues 2633–2751 enclose the RdRp catalytic domain; it reads PMGFSYDTRC…ICESAGTQED (119 aa). Aspartate 2639, aspartate 2737, and aspartate 2738 together coordinate Mg(2+). The chain crosses the membrane as a helical span at residues 2990–3010; the sequence is WFMLCLLLLSVGVGIYLLPNR.

This sequence belongs to the hepacivirus polyprotein family. Homooligomer. Interacts with E1 (via C-terminus). Interacts with the non-structural protein 5A. Interacts (via N-terminus) with host STAT1 (via SH2 domain); this interaction results in decreased STAT1 phosphorylation and ubiquitin-mediated proteasome-dependent STAT1 degradation, leading to decreased IFN-stimulated gene transcription. Interacts with host STAT3; this interaction constitutively activates STAT3. Interacts with host LTBR receptor. Interacts with host TNFRSF1A receptor and possibly induces apoptosis. Interacts with host HNRPK. Interacts with host YWHAE. Interacts with host UBE3A/E6AP. Interacts with host DDX3X. Interacts with host APOA2. Interacts with host RXRA protein. Interacts with host SP110 isoform 3/Sp110b; this interaction sequesters the transcriptional corepressor SP110 away from the nucleus. Interacts with host CREB3 nuclear transcription protein; this interaction triggers cell transformation. Interacts with host ACY3. Interacts with host C1QR1. Interacts with host RBM24; this interaction, which enhances the interaction of the mature core protein with 5'-UTR, may inhibit viral translation and favor replication. Interacts with host EIF2AK2/PKR; this interaction induces the autophosphorylation of EIF2AK2. Part of the viral assembly initiation complex composed of NS2, E1, E2, NS3, NS4A, NS5A and the mature core protein. As to quaternary structure, forms a heterodimer with envelope glycoprotein E2. Interacts with mature core protein. Interacts with protease NS2. The heterodimer E1/E2 interacts with host CLDN1; this interaction plays a role in viral entry into host cell. Interacts with host SPSB2 (via C-terminus). Part of the viral assembly initiation complex composed of NS2, E1, E2, NS3, NS4A, NS5A and the mature core protein. Interacts with host NEURL3; this interaction prevents E1 binding to glycoprotein E2. In terms of assembly, forms a heterodimer with envelope glycoprotein E1. Interacts with host CD81 and SCARB1 receptors; these interactions play a role in viral entry into host cell. Interacts with host EIF2AK2/PKR; this interaction inhibits EIF2AK2 and probably allows the virus to evade the innate immune response. Interacts with host CD209/DC-SIGN and CLEC4M/DC-SIGNR. Interact with host SPCS1; this interaction is essential for viral particle assembly. Interacts with protease NS2. The heterodimer E1/E2 interacts with host CLDN1; this interaction plays a role in viral entry into host cell. Part of the viral assembly initiation complex composed of NS2, E1, E2, NS3, NS4A, NS5A and the mature core protein. Interacts with host SLC3A2/4F2hc; the interaction may facilitate viral entry into host cell. Interacts with human PLSCR1. Homohexamer. Homoheptamer. Interacts with protease NS2. As to quaternary structure, homodimer. Interacts with host SPCS1; this interaction is essential for viral particle assembly. Interacts with envelope glycoprotein E1. Interacts with envelope glycoprotein E2. Interacts with viroporin p7. Interacts with serine protease/helicase NS3. Part of the replication complex composed of NS2, NS3, NS4A, NS4B, NS5A and the RNA-directed RNA polymerase embedded in an ER-derived membranous web. Part of the viral assembly initiation complex composed of NS2, E1, E2, NS3, NS4A, NS5A and the mature core protein. In terms of assembly, interacts with protease NS2. Interacts with non-structural protein 4A; this interaction stabilizes the folding of NS3 serine protease. NS3-NS4A interaction is essential for NS3 activation and allows membrane anchorage of the latter. NS3/NS4A complex also prevents phosphorylation of host IRF3, thus preventing the establishment of dsRNA induced antiviral state. Interacts with host MAVS; this interaction leads to the cleavage and inhibition of host MAVS. Interacts with host TICAM1; this interaction leads to the cleavage and inhibition of host TICAM1. Interacts with host TANK-binding kinase/TBK1; this interaction results in the inhibition of the association between TBK1 and IRF3, which leads to the inhibition of IRF3 activation. Interacts with host RBM24. Part of the replication complex composed of NS2, NS3, NS4A, NS4B, NS5A and the RNA-directed RNA polymerase embedded in an ER-derived membranous web. Part of the viral assembly initiation complex composed of NS2, E1, E2, NS3, NS4A, NS5A and the mature core protein. Interacts with NS3 serine protease; this interaction stabilizes the folding of NS3 serine protease. NS3-NS4A interaction is essential for NS3 activation and allows membrane anchorage of the latter. Interacts with non-structural protein 5A (via N-terminus). Part of the replication complex composed of NS2, NS3, NS4A, NS4B, NS5A and the RNA-directed RNA polymerase embedded in an ER-derived membranous web. Part of the viral assembly initiation complex composed of NS2, E1, E2, NS3, NS4A, NS5A and the mature core protein. As to quaternary structure, homomultimer. Interacts with non-structural protein NS5A. Interacts with host PLA2G4C; this interaction likely initiates the recruitment of replication complexes to lipid droplets. Interacts with host STING; this interaction disrupts the interaction between STING and TBK1 thereby suppressing the interferon signaling. Part of the replication complex composed of NS2, NS3, NS4A, NS4B, NS5A and the RNA-directed RNA polymerase embedded in an ER-derived membranous web. In terms of assembly, monomer. Homodimer; dimerization is required for RNA-binding. Interacts with the mature core protein. Interacts (via N-terminus) with non-structural protein 4A. Interacts with non-structural protein 4B. Interacts (via region D2) with RNA-directed RNA polymerase. Part of the viral assembly initiation complex composed of NS2, E1, E2, NS3, NS4A, NS5A and the mature core protein. Part of the replication complex composed of NS2, NS3, NS4A, NS4B, NS5A and the RNA-directed RNA polymerase embedded in an ER-derived membranous web. Interacts with host GRB2. Interacts with host BIN1. Interacts with host PIK3R1. Interacts with host SRCAP. Interacts with host FKBP8. Interacts (via C-terminus) with host VAPB (via MSP domain). Interacts with host EIF2AK2/PKR; this interaction leads to disruption of EIF2AK2 dimerization by NS5A and probably allows the virus to evade the innate immune response. Interacts (via N-terminus) with host PACSIN2 (via N-terminus); this interaction attenuates protein kinase C alpha-mediated phosphorylation of PACSIN2 by disrupting the interaction between PACSIN2 and PRKCA. Interacts (via N-terminus) with host SRC kinase (via SH2 domain). Interacts with most Src-family kinases. Interacts with host IFI27 and SKP2; promotes the ubiquitin-mediated proteasomal degradation of NS5A. Interacts with host GPS2. Interacts with host TNFRSF21; this interaction allows the modulation by the virus of JNK, p38 MAPK, STAT3, and Akt signaling pathways in a DR6-dependent manner. Interacts (via N-terminus) with host CIDEB (via N-terminus); this interaction seems to regulate the association of HCV particles with APOE. Interacts with host CHKA/Choline Kinase-alpha; CHKA bridges host PI4KA and NS5A and potentiates NS5A-stimulated PI4KA activity, which then facilitates the targeting of the ternary complex to the ER for viral replication. Interacts with host SPSB2 (via C-terminus); this interaction targets NS5A for ubiquitination and degradation. Interacts with host RAB18; this interaction may promote the association of NS5A and other replicase components with lipid droplets. Interacts (via region D2) with host PPIA/CYPA; the interaction stimulates RNA-binding ability of NS5A and is dependent on the peptidyl-prolyl cis-trans isomerase activity of PPIA/CYPA. Interacts with host TRIM14; this interaction induces the degradation of NS5A. Homooligomer. Interacts with non-structural protein 5A. Interacts with host VAPB. Interacts with host PRK2/PKN2. Interacts with host HNRNPA1 and SEPT6; these interactions facilitate viral replication. Part of the replication complex composed of NS2, NS3, NS4A, NS4B, NS5A and the RNA-directed RNA polymerase. It depends on Zn(2+) as a cofactor. Mg(2+) serves as cofactor. Specific enzymatic cleavages in vivo yield mature proteins. The structural proteins, core, E1, E2 and p7 are produced by proteolytic processing by host signal peptidases. The core protein precursor is synthesized as a 23 kDa, which is retained in the ER membrane through the hydrophobic signal peptide. Cleavage by the signal peptidase releases the 21 kDa mature core protein. The cleavage of the core protein precursor occurs between aminoacids 176 and 188 but the exact cleavage site is not known. Some degraded forms of the core protein appear as well during the course of infection. The other proteins (p7, NS2, NS3, NS4A, NS4B, NS5A and NS5B) are cleaved by the viral proteases. Autoprocessing between NS2 and NS3 is mediated by the NS2 cysteine protease catalytic domain and regulated by the NS3 N-terminal domain. In terms of processing, phosphorylated by host PKC and PKA. Post-translationally, ubiquitinated; mediated by UBE3A and leading to core protein subsequent proteasomal degradation. Highly N-glycosylated. In terms of processing, palmitoylation is required for NS2/3 autoprocessing and E2 recruitment to membranes. Post-translationally, palmitoylated. This modification may play a role in its polymerization or in protein-protein interactions. Phosphorylated on serines in a basal form termed p56. p58 is a hyperphosphorylated form of p56. p56 and p58 coexist in the cell in roughly equivalent amounts. Hyperphosphorylation is dependent on the presence of NS4A. Host CSNK1A1/CKI-alpha or RPS6KB1 kinases may be responsible for NS5A phosphorylation. In terms of processing, tyrosine phosphorylation is essential for the interaction with host SRC. Post-translationally, the N-terminus is phosphorylated by host PRK2/PKN2. Ubiquitinated. Ubiquitination, most probably at Lys-2350, mediated by host IFI27 and SKP2 leads to proteasomal degradation, restricting viral infection. Ubiquitination by host TRIM22 leads to interruption of viral replication.

It is found in the host endoplasmic reticulum membrane. The protein resides in the host mitochondrion membrane. It localises to the virion. The protein localises to the host cytoplasm. Its subcellular location is the host nucleus. It is found in the host lipid droplet. The protein resides in the virion membrane. It localises to the host mitochondrion. The protein localises to the host cell membrane. Its subcellular location is the host perinuclear region. The enzyme catalyses Hydrolysis of four peptide bonds in the viral precursor polyprotein, commonly with Asp or Glu in the P6 position, Cys or Thr in P1 and Ser or Ala in P1'.. The catalysed reaction is a ribonucleoside 5'-triphosphate + H2O = a ribonucleoside 5'-diphosphate + phosphate + H(+). It catalyses the reaction ATP + H2O = ADP + phosphate + H(+). It carries out the reaction RNA(n) + a ribonucleoside 5'-triphosphate = RNA(n+1) + diphosphate. With respect to regulation, inhibited by the antiviral drug hexamethylene amiloride. Inhibition by amantadine appears to be genotype-dependent. Also inhibited by long-alkyl-chain iminosugar derivatives. Activity is up-regulated by PRK2/PKN2-mediated phosphorylation. Its function is as follows. Packages viral RNA to form a viral nucleocapsid, and promotes virion budding. Participates in the viral particle production as a result of its interaction with the non-structural protein 5A. Binds RNA and may function as a RNA chaperone to induce the RNA structural rearrangements taking place during virus replication. Modulates viral translation initiation by interacting with viral IRES and 40S ribosomal subunit. Affects various cell signaling pathways, host immunity and lipid metabolism. Prevents the establishment of cellular antiviral state by blocking the interferon-alpha/beta (IFN-alpha/beta) and IFN-gamma signaling pathways and by blocking the formation of phosphorylated STAT1 and promoting ubiquitin-mediated proteasome-dependent degradation of STAT1. Activates STAT3 leading to cellular transformation. Regulates the activity of cellular genes, including c-myc and c-fos. May repress the promoter of p53, and sequester CREB3 and SP110 isoform 3/Sp110b in the cytoplasm. Represses cell cycle negative regulating factor CDKN1A, thereby interrupting an important check point of normal cell cycle regulation. Targets transcription factors involved in the regulation of inflammatory responses and in the immune response: suppresses TNF-induced NF-kappa-B activation, and activates AP-1. Binds to dendritic cells (DCs) via C1QR1, resulting in down-regulation of T-lymphocytes proliferation. Alters lipid metabolism by interacting with hepatocellular proteins involved in lipid accumulation and storage. Induces up-regulation of FAS promoter activity, and thereby contributes to the increased triglyceride accumulation in hepatocytes (steatosis). Functionally, forms a heterodimer with envelope glycoprotein E2, which mediates virus attachment to the host cell, virion internalization through clathrin-dependent endocytosis and fusion with host membrane. Fusion with the host cell is most likely mediated by both E1 and E2, through conformational rearrangements of the heterodimer required for fusion rather than a classical class II fusion mechanism. E1/E2 heterodimer binds host apolipoproteins such as APOB and ApoE thereby forming a lipo-viro-particle (LVP). APOE associated to the LVP allows the initial virus attachment to cell surface receptors such as the heparan sulfate proteoglycans (HSPGs), syndecan-1 (SDC1), syndecan-1 (SDC2), the low-density lipoprotein receptor (LDLR) and scavenger receptor class B type I (SCARB1). The cholesterol transfer activity of SCARB1 allows E2 exposure and binding of E2 to SCARB1 and the tetraspanin CD81. E1/E2 heterodimer binding on CD81 activates the epithelial growth factor receptor (EGFR) signaling pathway. Diffusion of the complex E1-E2-EGFR-SCARB1-CD81 to the cell lateral membrane allows further interaction with Claudin 1 (CLDN1) and occludin (OCLN) to finally trigger HCV entry. Forms a heterodimer with envelope glycoprotein E1, which mediates virus attachment to the host cell, virion internalization through clathrin-dependent endocytosis and fusion with host membrane. Fusion with the host cell is most likely mediated by both E1 and E2, through conformational rearrangements of the heterodimer required for fusion rather than a classical class II fusion mechanism. The interaction between envelope glycoprotein E2 and host apolipoprotein E/APOE allows the proper assembly, maturation and infectivity of the viral particles. This interaction is probably promoted via the up-regulation of cellular autophagy by the virus. E1/E2 heterodimer binds host apolipoproteins such as APOB and APOE thereby forming a lipo-viro-particle (LVP). APOE associated to the LVP allows the initial virus attachment to cell surface receptors such as the heparan sulfate proteoglycans (HSPGs), syndecan-1 (SDC1), syndecan-1 (SDC2), the low-density lipoprotein receptor (LDLR) and scavenger receptor class B type I (SCARB1). The cholesterol transfer activity of SCARB1 allows E2 exposure and binding of E2 to SCARB1 and the tetraspanin CD81. E1/E2 heterodimer binding on CD81 activates the epithelial growth factor receptor (EGFR) signaling pathway. Diffusion of the complex E1-E2-EGFR-SCARB1-CD81 to the cell lateral membrane allows further interaction with Claudin 1 (CLDN1) and occludin (OCLN) to finally trigger HCV entry. Inhibits host EIF2AK2/PKR activation, preventing the establishment of an antiviral state. Viral ligand for CD209/DC-SIGN and CLEC4M/DC-SIGNR, which are respectively found on dendritic cells (DCs), and on liver sinusoidal endothelial cells and macrophage-like cells of lymph node sinuses. These interactions allow the capture of circulating HCV particles by these cells and subsequent facilitated transmission to permissive cells such as hepatocytes and lymphocyte subpopulations. The interaction between E2 and host amino acid transporter complex formed by SLC3A2 and SLC7A5/LAT1 may facilitate viral entry into host cell. In terms of biological role, ion channel protein that acts as a viroporin and plays an essential role in the assembly, envelopment and secretion of viral particles. Regulates the host cell secretory pathway, which induces the intracellular retention of viral glycoproteins and favors assembly of viral particles. Creates a pore in acidic organelles and releases Ca(2+) and H(+) in the cytoplasm of infected cells, leading to a productive viral infection. High levels of cytoplasmic Ca(2+) may trigger membrane trafficking and transport of viral ER-associated proteins to viroplasms, sites of viral genome replication. This ionic imbalance induces the assembly of the inflammasome complex, which triggers the maturation of pro-IL-1beta into IL-1beta through the action of caspase-1. Targets also host mitochondria and induces mitochondrial depolarization. In addition of its role as a viroporin, acts as a lipid raft adhesion factor. Its function is as follows. Cysteine protease required for the proteolytic auto-cleavage between the non-structural proteins NS2 and NS3. The N-terminus of NS3 is required for the function of NS2 protease (active region NS2-3). Promotes the initiation of viral particle assembly by mediating the interaction between structural and non-structural proteins. Functionally, displays three enzymatic activities: serine protease with a chymotrypsin-like fold, NTPase and RNA helicase. NS3 serine protease, in association with NS4A, is responsible for the cleavages of NS3-NS4A, NS4A-NS4B, NS4B-NS5A and NS5A-NS5B. The NS3/NS4A complex prevents phosphorylation of host IRF3, thus preventing the establishment of dsRNA induced antiviral state. The NS3/NS4A complex induces host amino acid transporter component SLC3A2, thus contributing to HCV propagation. NS3 RNA helicase binds to RNA and unwinds both dsDNA and dsRNA in the 3' to 5' direction, and likely resolves RNA complicated stable secondary structures in the template strand. Binds a single ATP and catalyzes the unzipping of a single base pair of dsRNA. Inhibits host antiviral proteins TBK1 and IRF3 thereby preventing the establishment of an antiviral state. Cleaves host MAVS/CARDIF thereby preventing the establishment of an antiviral state. Cleaves host TICAM1/TRIF, thereby disrupting TLR3 signaling and preventing the establishment of an antiviral state. Peptide cofactor which forms a non-covalent complex with the N-terminal of NS3 serine protease. The NS3/NS4A complex prevents phosphorylation of host IRF3, thus preventing the establishment of dsRNA induced antiviral state. The NS3/NS4A complex induces host amino acid transporter component SLC3A2, thus contributing to HCV propagation. In terms of biological role, induces a specific membrane alteration that serves as a scaffold for the virus replication complex. This membrane alteration gives rise to the so-called ER-derived membranous web that contains the replication complex. NS4B self-interaction contributes to its function in membranous web formation. Promotes host TRIF protein degradation in a CASP8-dependent manner thereby inhibiting host TLR3-mediated interferon signaling. Disrupts the interaction between STING and TBK1 contributing to the inhibition of interferon signaling. Its function is as follows. Phosphorylated protein that is indispensable for viral replication and assembly. Both hypo- and hyperphosphorylated states are required for the viral life cycle. The hyperphosphorylated form of NS5A is an inhibitor of viral replication. Involved in RNA-binding and especially in binding to the viral genome. Zinc is essential for RNA-binding. Participates in the viral particle production as a result of its interaction with the mature viral core protein. Its interaction with host VAPB may target the viral replication complex to vesicles. Down-regulates viral IRES translation initiation. Mediates interferon resistance, presumably by interacting with and inhibiting host EIF2AK2/PKR. Prevents BIN1-induced apoptosis. Acts as a transcriptional activator of some host genes important for viral replication when localized in the nucleus. Via the interaction with host PACSIN2, modulates lipid droplet formation in order to promote virion assembly. Modulates TNFRSF21/DR6 signaling pathway for viral propagation. Functionally, RNA-dependent RNA polymerase that performs primer-template recognition and RNA synthesis during viral replication. Initiates RNA transcription/replication at a flavin adenine dinucleotide (FAD), resulting in a 5'- FAD cap on viral RNAs. In this way, recognition of viral 5' RNA by host pattern recognition receptors can be bypassed, thereby evading activation of antiviral pathways. This is Genome polyprotein from Hepatitis C virus genotype 1b (isolate Taiwan) (HCV).